Reading from the N-terminus, the 162-residue chain is Selenoprotein F (162 aa).

The first 28 residues, 1–28 (MAAGQGGWLRPALGLRLLLATAFQAVSA), serve as a signal peptide directing secretion. A non-standard amino acid (selenocysteine) is located at residue U93.

The protein belongs to the selenoprotein M/F family. Forms a tight complex with UGGT1/UGCGL1. Interacts with UGGT2/UGCGL2. Interacts with RDH11.

It is found in the endoplasmic reticulum lumen. May be involved in redox reactions associated with the formation of disulfide bonds. May contribute to the quality control of protein folding in the endoplasmic reticulum. May regulate protein folding by enhancing the catalytic activity of UGGT1/UGCGL1 and UGGT2/UGCGL2. The protein is Selenoprotein F of Mus musculus (Mouse).